The following is a 440-amino-acid chain: Thymidine phosphorylase (440 aa).

It belongs to the thymidine/pyrimidine-nucleoside phosphorylase family. Homodimer.

It catalyses the reaction thymidine + phosphate = 2-deoxy-alpha-D-ribose 1-phosphate + thymine. It functions in the pathway pyrimidine metabolism; dTMP biosynthesis via salvage pathway; dTMP from thymine: step 1/2. Functionally, the enzymes which catalyze the reversible phosphorolysis of pyrimidine nucleosides are involved in the degradation of these compounds and in their utilization as carbon and energy sources, or in the rescue of pyrimidine bases for nucleotide synthesis. The polypeptide is Thymidine phosphorylase (Salmonella agona (strain SL483)).